Consider the following 110-residue polypeptide: UPF0122 protein SGO_1122 (110 aa).

This sequence belongs to the UPF0122 family.

In terms of biological role, might take part in the signal recognition particle (SRP) pathway. This is inferred from the conservation of its genetic proximity to ftsY/ffh. May be a regulatory protein. The protein is UPF0122 protein SGO_1122 of Streptococcus gordonii (strain Challis / ATCC 35105 / BCRC 15272 / CH1 / DL1 / V288).